The following is a 191-amino-acid chain: Ferric nitrobindin-like protein (191 aa).

A GXWXGXG motif is present at residues 20–26 (GDWAGAG).

This sequence belongs to the nitrobindin family.

This Streptomyces coelicolor (strain ATCC BAA-471 / A3(2) / M145) protein is Ferric nitrobindin-like protein.